A 115-amino-acid chain; its full sequence is U3-lycotoxin-Ls1k (115 aa).

The signal sequence occupies residues 1-20; it reads MKFVLLFGVLVVTLFSYSSA. The propeptide occupies 21 to 44; the sequence is EMLDDFDQADEDELLSLIEKEEAR. 4 cysteine pairs are disulfide-bonded: C48-C63, C55-C72, C62-C87, and C74-C85.

This sequence belongs to the neurotoxin 19 (CSTX) family. 01 subfamily. As to expression, expressed by the venom gland.

It localises to the secreted. The polypeptide is U3-lycotoxin-Ls1k (Lycosa singoriensis (Wolf spider)).